The chain runs to 179 residues: DELTA-actitoxin-Afr1e (179 aa).

The N-terminal alpha-helix that contributes to the pore stretch occupies residues 1 to 29 (SADVAGAVIDGAGLGFDVLKTVLEALGNV). Positions 11–30 (GAGLGFDVLKTVLEALGNVK) are N-terminal region. Position 31 (Arg31) interacts with an N-(acyl)-sphingosylphosphocholine. The N-acetyl-D-glucosamine 6-sulfate site is built by Tyr51 and Arg53. Residues Arg53, Ser54, Arg79, Gly85, Tyr108, Tyr113, Ser114, Trp116, Tyr133, Tyr137, Tyr138, Arg144, and Gly168 each coordinate an N-(acyl)-sphingosylphosphocholine. Residues 105–120 (SVPYDYNWYSNWWNVR) form a trp-rich region, which is important for the binding to lipid membrane region. N-acetyl-D-glucosamine 6-sulfate is bound at residue Tyr138. The Cell attachment site, crucial for protein stability signature appears at 144–146 (RGD).

This sequence belongs to the actinoporin family. Sea anemone subfamily. As to quaternary structure, octamer or nonamer in membranes. Monomer in the soluble state.

The protein resides in the secreted. It localises to the nematocyst. The protein localises to the target cell membrane. Pore-forming toxin (PFT) that consists of a crown-shaped octamer or nonamer that forms cation-selective hydrophilic pores of about 1.5 nm (inside) and 13 nm (outside) and causes cytolysis. It causes cardiac stimulation. Also causes hemolysis (HC(50)=1.6 nM). Interestingly, the Phe-16 is crucial for hemolysis. Pore formation is a multi-step process that involves specific recognition of membrane sphingomyelin (but neither cholesterol nor phosphatidylcholine) using aromatic rich region and adjacent phosphocholine (POC) binding site, firm binding to the membrane (mainly driven by hydrophobic interactions) accompanied by the transfer of the N-terminal region to the lipid-water interface and finally pore formation after oligomerization of monomers. It is probable that a dimeric form is an assembly intermediate before the complete oligomerization. The formation of stable pores occurs only in vesicles composed of DOPC/SM (there is no oligomerization when the PFT is treated with vesicles of DOPC or SM alone). The transmembrane pore displays 8 lateral perforations, one at each subunit-subunit interface, partially occupied by the acyl-chain region of a bridging lipid. Each pore contains 24 lipid molecules, firmly bound to each subunit, that is, 3 lipids (L1, L2, L3, L4 and/or L5) are associated to each subunit. Lipid L1 bridges 2 subunits, whereas lipids L2 and L3 bind to sites at single subunit. The chain is DELTA-actitoxin-Afr1e from Actinia fragacea (Strawberry anemone).